The following is a 231-amino-acid chain: Allergen Ani s 10 (231 aa).

The signal sequence occupies residues 1-19 (MHLITALVLLLQLIHFITS). 7 repeat units span residues 28–56 (GGPG…QQNI), 57–85 (GGPG…QENI), 86–114 (GGPG…QQSI), 115–143 (EGPG…QQSI), 144–172 (EGPG…QQNI), 173–201 (GGPG…QQNI), and 204–231 (GGPG…SMQA). A 6 X 29 AA tandem repeats of [EG]-G-P-G-P-V-[IV]-[SG]-G-S-G-I-G-[ND]-V-W-[NE]-K-A-N-E-[QP]-A-[AE]-[QEH]-Q-[EQ]-[NS]-I region spans residues 28 to 201 (GGPGPVVGGS…NEQAAEQQNI (174 aa)). Disordered stretches follow at residues 107–126 (QAAH…GSGI) and 134–231 (NEQA…SMQA). 3 stretches are compositionally biased toward low complexity: residues 114-123 (IEGPGPVVSG), 143-152 (IEGPGPVVSG), and 177-187 (PVISGSGIGNV).

The protein is Allergen Ani s 10 of Anisakis simplex (Herring worm).